A 375-amino-acid chain; its full sequence is MQCALYDAGRCRSCQWIMQPIPEQLSAKTADLKNLLADFPVEEWCAPVSGPEQGFRNKAKMVVSGSVEKPLLGMLHRDGTPEDLCDCPLYPASFAPVFAALKPFIARAGLTPYNVARKRGELKYILLTESQSDGGMMLRFVLRSDTKLAQLRKALPWLHEQLPQLKVITVNIQPVHMAIMEGETEIYLTEQQALAERFNDVPLWIRPQSFFQTNPAVASQLYATARDWVRQLPVKHMWDLFCGVGGFGLHCATPDMQLTGIEIASEAIACAKQSAAELGLTRLQFQALDSTQFATAQGDVPELVLVNPPRRGIGKPLCDYLSTMAPRFIIYSSCNAQTMAKDIRELPGFRIERVQLFDMFPHTAHYEVLTLLVKQ.

4 residues coordinate [4Fe-4S] cluster: Cys3, Cys11, Cys14, and Cys87. Positions 212, 241, 262, and 307 each coordinate S-adenosyl-L-methionine. The Nucleophile role is filled by Cys334.

Belongs to the class I-like SAM-binding methyltransferase superfamily. RNA M5U methyltransferase family. RlmC subfamily.

The enzyme catalyses uridine(747) in 23S rRNA + S-adenosyl-L-methionine = 5-methyluridine(747) in 23S rRNA + S-adenosyl-L-homocysteine + H(+). Its function is as follows. Catalyzes the formation of 5-methyl-uridine at position 747 (m5U747) in 23S rRNA. The sequence is that of 23S rRNA (uracil(747)-C(5))-methyltransferase RlmC from Escherichia coli (strain K12 / MC4100 / BW2952).